Here is a 149-residue protein sequence, read N- to C-terminus: Transcriptional repressor NrdR (149 aa).

A zinc finger spans residues 3-34 (CPFCGANDTKVIDSRLVADGHQVRRRRQCLAC). In terms of domain architecture, ATP-cone spans 49-139 (PRVIKTDGNR…VYRSFEDIRE (91 aa)).

It belongs to the NrdR family. Zn(2+) is required as a cofactor.

Functionally, negatively regulates transcription of bacterial ribonucleotide reductase nrd genes and operons by binding to NrdR-boxes. This Photobacterium profundum (strain SS9) protein is Transcriptional repressor NrdR.